A 331-amino-acid chain; its full sequence is Fructose-1,6-bisphosphatase class 1 (331 aa).

Positions 100, 120, 122, and 123 each coordinate Mg(2+). Substrate contacts are provided by residues 123–126 (DGSS), Asn-216, Tyr-243, 261–263 (YLY), and Lys-273. Residue Glu-279 participates in Mg(2+) binding.

Belongs to the FBPase class 1 family. As to quaternary structure, homotetramer. Mg(2+) is required as a cofactor.

The protein localises to the cytoplasm. It carries out the reaction beta-D-fructose 1,6-bisphosphate + H2O = beta-D-fructose 6-phosphate + phosphate. The protein operates within carbohydrate biosynthesis; gluconeogenesis. The protein is Fructose-1,6-bisphosphatase class 1 of Amoebophilus asiaticus (strain 5a2).